The following is a 253-amino-acid chain: tRNA pseudouridine synthase A (253 aa).

Aspartate 51 serves as the catalytic Nucleophile. Tyrosine 110 is a substrate binding site.

It belongs to the tRNA pseudouridine synthase TruA family. In terms of assembly, homodimer.

The catalysed reaction is uridine(38/39/40) in tRNA = pseudouridine(38/39/40) in tRNA. Functionally, formation of pseudouridine at positions 38, 39 and 40 in the anticodon stem and loop of transfer RNAs. The protein is tRNA pseudouridine synthase A of Wolinella succinogenes (strain ATCC 29543 / DSM 1740 / CCUG 13145 / JCM 31913 / LMG 7466 / NCTC 11488 / FDC 602W) (Vibrio succinogenes).